Consider the following 206-residue polypeptide: Two-component response regulator ARR7 (206 aa).

One can recognise a Response regulatory domain in the interval 25-152; the sequence is HVLAVDDSIV…DVKRIKQLIM (128 aa). Asp-85 is subject to 4-aspartylphosphate. Residues 165 to 206 are disordered; that stretch reads SNKRKLQEDSDTSSSSHDDTSIKDSSCSKRMKSESENLFSLL.

This sequence belongs to the ARR family. Type-A subfamily. Post-translationally, two-component system major event consists of a His-to-Asp phosphorelay between a sensor histidine kinase (HK) and a response regulator (RR). In plants, the His-to-Asp phosphorelay involves an additional intermediate named Histidine-containing phosphotransfer protein (HPt). This multistep phosphorelay consists of a His-Asp-His-Asp sequential transfer of a phosphate group between first a His and an Asp of the HK protein, followed by the transfer to a conserved His of the HPt protein and finally the transfer to an Asp in the receiver domain of the RR protein. In terms of tissue distribution, predominantly expressed in roots and young flowers.

It is found in the nucleus. Its function is as follows. Functions as a response regulator involved in His-to-Asp phosphorelay signal transduction system. Phosphorylation of the Asp residue in the receiver domain activates the ability of the protein to promote the transcription of target genes. Type-A response regulators seem to act as negative regulators of the cytokinin signaling. This chain is Two-component response regulator ARR7 (ARR7), found in Arabidopsis thaliana (Mouse-ear cress).